A 1035-amino-acid chain; its full sequence is Enteropeptidase (1035 aa).

A lipid anchor (N-myristoyl glycine) is attached at Gly2. Over 2-18 (GSKRSVPSRHRSLTTYE) the chain is Cytoplasmic. A helical; Signal-anchor for type II membrane protein transmembrane segment spans residues 19–47 (VMFAVLFVILVALCAGLIAVSWLSIQGSV). Over 48-1035 (KDAAFGKSHE…FTEWIQSFLH (988 aa)) the chain is Extracellular. One can recognise an SEA domain in the interval 54–169 (KSHEARGTLK…NSIDITASLE (116 aa)). N-linked (GlcNAc...) asparagine glycans are attached at residues Asn116, Asn147, Asn170, and Asn194. The 42-residue stretch at 197–238 (IECPPDSRLCADALKCIAIDLFCDGELNCPDGSDEDNKTCAT) folds into the LDL-receptor class A 1 domain. Cystine bridges form between Cys199/Cys212, Cys206/Cys225, Cys219/Cys236, and Cys240/Cys269. N-linked (GlcNAc...) asparagine glycans are attached at residues Asn233, Asn263, Asn264, Asn404, Asn456, Asn486, Asn519, Asn550, and Asn646. Residues 240 to 350 (CDGRFLLTGS…IGFKVTYTAF (111 aa)) form the CUB 1 domain. One can recognise an MAM domain in the interval 358–520 (YEKINCNFED…ISLTYGICNV (163 aa)). Cys540 and Cys568 are oxidised to a cystine. The 111-residue stretch at 540 to 650 (CGGPHDLWEP…QGFKANFTTG (111 aa)) folds into the CUB 2 domain. The LDL-receptor class A 2 domain maps to 657-695 (EPCKEDNFQCKDGECIPLVNLCDGFPHCKDGSDEAHCVR). Disulfide bonds link Cys659-Cys671, Cys666-Cys684, and Cys678-Cys693. The SRCR domain maps to 694–787 (VRLFNGTTDS…LILLQCNYKS (94 aa)). Residues Asn698, Asn722, Asn741, and Asn762 are each glycosylated (N-linked (GlcNAc...) asparagine). 6 disulfides stabilise this stretch: Cys773-Cys783, Cys788-Cys912, Cys826-Cys842, Cys926-Cys993, Cys957-Cys972, and Cys983-Cys1011. The region spanning 801–1035 (IVGGSDSREG…FTEWIQSFLH (235 aa)) is the Peptidase S1 domain. The Charge relay system role is filled by His841. Asn864 carries an N-linked (GlcNAc...) asparagine glycan. Asp892 acts as the Charge relay system in catalysis. Residues Asn903 and Asn965 are each glycosylated (N-linked (GlcNAc...) asparagine). Ser987 acts as the Charge relay system in catalysis.

It belongs to the peptidase S1 family. Heterodimer of a catalytic (light) chain and a multidomain (heavy) chain linked by a disulfide bond. In terms of processing, the chains are derived from a single precursor that is cleaved by a trypsin-like protease. Intestinal brush border.

It localises to the membrane. It carries out the reaction Activation of trypsinogen by selective cleavage of 6-Lys-|-Ile-7 bond.. Its function is as follows. Responsible for initiating activation of pancreatic proteolytic proenzymes (trypsin, chymotrypsin and carboxypeptidase A). It catalyzes the conversion of trypsinogen to trypsin which in turn activates other proenzymes including chymotrypsinogen, procarboxypeptidases, and proelastases. The polypeptide is Enteropeptidase (TMPRSS15) (Bos taurus (Bovine)).